The following is a 131-amino-acid chain: Small ribosomal subunit protein eS8 (131 aa).

Residues 11 to 36 (DLKKPSGGKKGRVRKTKKKALCGGPP) are disordered. Residues 16–30 (SGGKKGRVRKTKKKA) are compositionally biased toward basic residues.

Belongs to the eukaryotic ribosomal protein eS8 family. As to quaternary structure, part of the 30S ribosomal subunit.

The protein is Small ribosomal subunit protein eS8 of Pyrobaculum islandicum (strain DSM 4184 / JCM 9189 / GEO3).